The following is a 289-amino-acid chain: 2-dehydro-3-deoxyphosphooctonate aldolase (289 aa).

This sequence belongs to the KdsA family.

The protein localises to the cytoplasm. The catalysed reaction is D-arabinose 5-phosphate + phosphoenolpyruvate + H2O = 3-deoxy-alpha-D-manno-2-octulosonate-8-phosphate + phosphate. Its pathway is carbohydrate biosynthesis; 3-deoxy-D-manno-octulosonate biosynthesis; 3-deoxy-D-manno-octulosonate from D-ribulose 5-phosphate: step 2/3. It functions in the pathway bacterial outer membrane biogenesis; lipopolysaccharide biosynthesis. This Cupriavidus taiwanensis (strain DSM 17343 / BCRC 17206 / CCUG 44338 / CIP 107171 / LMG 19424 / R1) (Ralstonia taiwanensis (strain LMG 19424)) protein is 2-dehydro-3-deoxyphosphooctonate aldolase.